A 949-amino-acid chain; its full sequence is AP-1 complex subunit beta-1 (949 aa).

Lysine 318 carries the post-translational modification N6-acetyllysine. The residue at position 574 (tyrosine 574) is a 3'-nitrotyrosine. Positions 592–623 (SLPPRTASSESTESPEAAPAGAPASDQPDVIP) are disordered. Residues 594-616 (PPRTASSESTESPEAAPAGAPAS) show a composition bias toward low complexity.

This sequence belongs to the adaptor complexes large subunit family. In terms of assembly, adaptor protein complex 1 (AP-1) is a heterotetramer composed of two large adaptins (gamma-type subunit AP1G1 and beta-type subunit AP1B1), a medium adaptin (mu-type subunit AP1M1 or AP1M2) and a small adaptin (sigma-type subunit AP1S1 or AP1S2 or AP1S3). Post-translationally, the N-terminus is blocked.

It localises to the golgi apparatus. The protein resides in the cytoplasmic vesicle. Its subcellular location is the clathrin-coated vesicle membrane. Its function is as follows. Subunit of clathrin-associated adaptor protein complex 1 that plays a role in protein sorting in the late-Golgi/trans-Golgi network (TGN) and/or endosomes. The AP complexes mediate both the recruitment of clathrin to membranes and the recognition of sorting signals within the cytosolic tails of transmembrane cargo molecules. The protein is AP-1 complex subunit beta-1 (Ap1b1) of Rattus norvegicus (Rat).